Consider the following 119-residue polypeptide: Centrocin 1 (119 aa).

A signal peptide spans M1 to A20. The propeptide occupies K21–Q50. 6'-bromotryptophan occurs at positions 52 and 53. A disulfide bridge links C75 with C110. A propeptide spanning residues S81–E104 is cleaved from the precursor. Residue N117 is modified to Asparagine amide.

As to quaternary structure, heterodimer of a light and a heavy chain, probably disulfide-linked.

Has antimicrobial activity against Gram-negative bacteria, Gram-positive bacteria and against fungi with minimum inhibitory concentration (MIC) between 0.78 uM and 50 uM. Shows little hemolytic activity even at a concentration of 100 uM. In terms of biological role, has no antimicrobial activity. Shows no hemolytic activity. The chain is Centrocin 1 from Echinus esculentus (Sea urchin).